A 424-amino-acid chain; its full sequence is Glutamyl-tRNA reductase (424 aa).

Residues 49–52 (TCNR), serine 105, 110–112 (EPQ), and glutamine 116 each bind substrate. The active-site Nucleophile is cysteine 50. An NADP(+)-binding site is contributed by 185-190 (GSGETA).

The protein belongs to the glutamyl-tRNA reductase family. In terms of assembly, homodimer.

The enzyme catalyses (S)-4-amino-5-oxopentanoate + tRNA(Glu) + NADP(+) = L-glutamyl-tRNA(Glu) + NADPH + H(+). The protein operates within porphyrin-containing compound metabolism; protoporphyrin-IX biosynthesis; 5-aminolevulinate from L-glutamyl-tRNA(Glu): step 1/2. Its function is as follows. Catalyzes the NADPH-dependent reduction of glutamyl-tRNA(Glu) to glutamate 1-semialdehyde (GSA). This chain is Glutamyl-tRNA reductase, found in Legionella pneumophila (strain Lens).